The primary structure comprises 508 residues: Hydroxymethylglutaryl-CoA synthase, mitochondrial (508 aa).

The N-terminal 37 residues, 1–37 (MQRLLTPVRQVLRVKRAMQEASFMPPLLPPAAHQRFS), are a transit peptide targeting the mitochondrion. The residue at position 52 (lysine 52) is an N6-succinyllysine. (3S)-3-hydroxy-3-methylglutaryl-CoA is bound by residues glutamate 80 and alanine 81. Glutamate 132 (proton donor/acceptor) is an active-site residue. Positions 166, 204, and 208 each coordinate (3S)-3-hydroxy-3-methylglutaryl-CoA. The active-site Acyl-thioester intermediate is cysteine 166. An N6-acetyllysine modification is found at lysine 243. Residue lysine 256 is modified to N6-acetyllysine; alternate. At lysine 256 the chain carries N6-succinyllysine; alternate. (3S)-3-hydroxy-3-methylglutaryl-CoA contacts are provided by serine 258 and histidine 301. Histidine 301 acts as the Proton donor/acceptor in catalysis. Position 306 is an N6-acetyllysine (lysine 306). (3S)-3-hydroxy-3-methylglutaryl-CoA is bound at residue lysine 310. Lysine 310 carries the post-translational modification N6-acetyllysine; alternate. Lysine 310 bears the N6-succinyllysine; alternate mark. An N6-succinyllysine modification is found at lysine 333. 4 positions are modified to N6-acetyllysine; alternate: lysine 342, lysine 350, lysine 354, and lysine 358. N6-succinyllysine; alternate occurs at positions 342, 350, 354, and 358. Positions 380 and 414 each coordinate (3S)-3-hydroxy-3-methylglutaryl-CoA. A Phosphoserine modification is found at serine 433. Position 437 is an N6-acetyllysine (lysine 437). Residues serine 440 and serine 456 each carry the phosphoserine modification. An N6-acetyllysine; alternate modification is found at lysine 473. Lysine 473 is subject to N6-succinyllysine; alternate.

Belongs to the thiolase-like superfamily. HMG-CoA synthase family. In terms of assembly, homodimer. In terms of processing, succinylated. Desuccinylated by SIRT5. Succinylation, at least at Lys-310, inhibits the enzymatic activity.

The protein localises to the mitochondrion. The catalysed reaction is acetoacetyl-CoA + acetyl-CoA + H2O = (3S)-3-hydroxy-3-methylglutaryl-CoA + CoA + H(+). It functions in the pathway metabolic intermediate biosynthesis; (R)-mevalonate biosynthesis; (R)-mevalonate from acetyl-CoA: step 2/3. In terms of biological role, catalyzes the first irreversible step in ketogenesis, condensing acetyl-CoA to acetoacetyl-CoA to form HMG-CoA, which is converted by HMG-CoA reductase (HMGCR) into mevalonate. This Sus scrofa (Pig) protein is Hydroxymethylglutaryl-CoA synthase, mitochondrial (HMGCS2).